The following is a 263-amino-acid chain: 22 kDa alpha-zein 16 (263 aa).

The N-terminal stretch at 1–21 is a signal peptide; sequence MATKILALLALLALLVSATNA.

The protein belongs to the zein family. As to expression, expressed in developing endosperm.

In terms of biological role, zeins are major seed storage proteins. The chain is 22 kDa alpha-zein 16 from Zea mays (Maize).